Consider the following 120-residue polypeptide: Chaperonin GroEL (120 aa).

An ATP-binding site is contributed by 23–27 (DGTTT).

It belongs to the chaperonin (HSP60) family. Forms a cylinder of 14 subunits composed of two heptameric rings stacked back-to-back. Interacts with the co-chaperonin GroES.

The protein resides in the cytoplasm. The catalysed reaction is ATP + H2O + a folded polypeptide = ADP + phosphate + an unfolded polypeptide.. In terms of biological role, together with its co-chaperonin GroES, plays an essential role in assisting protein folding. The GroEL-GroES system forms a nano-cage that allows encapsulation of the non-native substrate proteins and provides a physical environment optimized to promote and accelerate protein folding. The sequence is that of Chaperonin GroEL from Mycobacterium intracellulare.